Here is an 88-residue protein sequence, read N- to C-terminus: Small ribosomal subunit protein uS15 (88 aa).

This sequence belongs to the universal ribosomal protein uS15 family. As to quaternary structure, part of the 30S ribosomal subunit. Forms a bridge to the 50S subunit in the 70S ribosome, contacting the 23S rRNA.

In terms of biological role, one of the primary rRNA binding proteins, it binds directly to 16S rRNA where it helps nucleate assembly of the platform of the 30S subunit by binding and bridging several RNA helices of the 16S rRNA. Forms an intersubunit bridge (bridge B4) with the 23S rRNA of the 50S subunit in the ribosome. The sequence is that of Small ribosomal subunit protein uS15 from Mycoplasma mycoides subsp. mycoides SC (strain CCUG 32753 / NCTC 10114 / PG1).